A 249-amino-acid polypeptide reads, in one-letter code: DNA repair protein RecO (249 aa).

Belongs to the RecO family.

In terms of biological role, involved in DNA repair and RecF pathway recombination. In Desulforudis audaxviator (strain MP104C), this protein is DNA repair protein RecO.